We begin with the raw amino-acid sequence, 215 residues long: Ribosomal RNA small subunit methyltransferase G (215 aa).

S-adenosyl-L-methionine is bound by residues Gly-78, Leu-83, 128 to 129 (AE), and Arg-146.

The protein belongs to the methyltransferase superfamily. RNA methyltransferase RsmG family.

The protein resides in the cytoplasm. The catalysed reaction is guanosine(527) in 16S rRNA + S-adenosyl-L-methionine = N(7)-methylguanosine(527) in 16S rRNA + S-adenosyl-L-homocysteine. Functionally, specifically methylates the N7 position of guanine in position 527 of 16S rRNA. The polypeptide is Ribosomal RNA small subunit methyltransferase G (Anaeromyxobacter sp. (strain Fw109-5)).